A 502-amino-acid polypeptide reads, in one-letter code: tRNA-specific adenosine deaminase 1 (502 aa).

The A to I editase domain occupies 63-501 (SMGTGTKCIG…IRNPPDYHQF (439 aa)). Residue H87 coordinates Zn(2+). The Proton donor role is filled by E89. R93 and R94 together coordinate 1D-myo-inositol hexakisphosphate. C142 is a binding site for Zn(2+). A disordered region spans residues 174-194 (SSNLEAPGNERKCEDPDSPVT). The residue at position 191 (S191) is a Phosphoserine. Residue C299 coordinates Zn(2+). The 1D-myo-inositol hexakisphosphate site is built by K302, R305, K435, and K470.

This sequence belongs to the ADAT1 family. The cofactor is 1D-myo-inositol hexakisphosphate. In terms of tissue distribution, ubiquitously expressed.

The catalysed reaction is adenosine(37) in tRNA(Ala) + H2O + H(+) = inosine(37) in tRNA(Ala) + NH4(+). Functionally, specifically deaminates adenosine-37 to inosine in tRNA-Ala. The polypeptide is tRNA-specific adenosine deaminase 1 (ADAT1) (Homo sapiens (Human)).